Consider the following 309-residue polypeptide: MSEVNISASDVRELREKTGAGMMDCKKALIETKGNLEEAVDFLRTKGLAAAAKKAGRVAAEGLTAAKVDGLTGVVVEINSETDFVARNEQFQNLVTNIANLAINVKDIEELKAAKMPNGKSVEEDVVENIATIGENLTLRRMEVLKVSEGAIGSYVHNEVASNLGKISVLVGLQSSAKDTAKLEALAKQIAVHVAGNNPQSIDDSGLDQALVERERKVFFEKSKEEGKPDNIIEKMVEGRIRKFFAEVVLLQQNFLFDNKLTVAEVIKNAAKELGAEIQITKFIRYELGEGIEQEEKNFADEVAAVMKG.

Residues 82–85 (TDFV) are involved in Mg(2+) ion dislocation from EF-Tu.

This sequence belongs to the EF-Ts family.

It localises to the cytoplasm. Functionally, associates with the EF-Tu.GDP complex and induces the exchange of GDP to GTP. It remains bound to the aminoacyl-tRNA.EF-Tu.GTP complex up to the GTP hydrolysis stage on the ribosome. This chain is Elongation factor Ts, found in Rickettsia bellii (strain OSU 85-389).